The following is a 248-amino-acid chain: Triosephosphate isomerase (248 aa).

A substrate-binding site is contributed by 9-11; the sequence is NWK. The active-site Electrophile is the histidine 94. The active-site Proton acceptor is glutamate 166. Residues glycine 172, serine 212, and 233–234 each bind substrate; that span reads GG.

The protein belongs to the triosephosphate isomerase family. Homodimer.

The protein resides in the cytoplasm. The catalysed reaction is D-glyceraldehyde 3-phosphate = dihydroxyacetone phosphate. It participates in carbohydrate biosynthesis; gluconeogenesis. It functions in the pathway carbohydrate degradation; glycolysis; D-glyceraldehyde 3-phosphate from glycerone phosphate: step 1/1. Functionally, involved in the gluconeogenesis. Catalyzes stereospecifically the conversion of dihydroxyacetone phosphate (DHAP) to D-glyceraldehyde-3-phosphate (G3P). This Thermoanaerobacter pseudethanolicus (strain ATCC 33223 / 39E) (Clostridium thermohydrosulfuricum) protein is Triosephosphate isomerase.